A 128-amino-acid chain; its full sequence is Mediator of RNA polymerase II transcription subunit 31 (128 aa).

The protein belongs to the Mediator complex subunit 31 family. Component of the Mediator complex.

It is found in the nucleus. Its function is as follows. Component of the Mediator complex, a coactivator involved in the regulated transcription of nearly all RNA polymerase II-dependent genes. Mediator functions as a bridge to convey information from gene-specific regulatory proteins to the basal RNA polymerase II transcription machinery. Mediator is recruited to promoters by direct interactions with regulatory proteins and serves as a scaffold for the assembly of a functional preinitiation complex with RNA polymerase II and the general transcription factors. The polypeptide is Mediator of RNA polymerase II transcription subunit 31 (med31) (Xenopus tropicalis (Western clawed frog)).